Consider the following 318-residue polypeptide: 4-diphosphocytidyl-2-C-methyl-D-erythritol kinase (318 aa).

Residue lysine 13 is part of the active site. 101-111 (PVAGGMAGGSA) contributes to the ATP binding site. Residue aspartate 143 is part of the active site. The tract at residues 298–318 (PGARLVTDDRADRPTPPQVHA) is disordered.

This sequence belongs to the GHMP kinase family. IspE subfamily.

The catalysed reaction is 4-CDP-2-C-methyl-D-erythritol + ATP = 4-CDP-2-C-methyl-D-erythritol 2-phosphate + ADP + H(+). It functions in the pathway isoprenoid biosynthesis; isopentenyl diphosphate biosynthesis via DXP pathway; isopentenyl diphosphate from 1-deoxy-D-xylulose 5-phosphate: step 3/6. Its function is as follows. Catalyzes the phosphorylation of the position 2 hydroxy group of 4-diphosphocytidyl-2C-methyl-D-erythritol. This is 4-diphosphocytidyl-2-C-methyl-D-erythritol kinase from Saccharopolyspora erythraea (strain ATCC 11635 / DSM 40517 / JCM 4748 / NBRC 13426 / NCIMB 8594 / NRRL 2338).